The sequence spans 296 residues: Peroxidase P7 (296 aa).

Q1 bears the Pyrrolidone carboxylic acid mark. 4 disulfide bridges follow: C11–C91, C44–C49, C97–C292, and C176–C201. H42 (proton acceptor) is an active-site residue. Ca(2+) contacts are provided by D43, V46, G48, D50, and S52. Substrate is bound at residue P139. Position 169 (H169) interacts with heme b. T170 serves as a coordination point for Ca(2+). N-linked (GlcNAc...) asparagine glycosylation is present at N185. Residues D216, S219, and D224 each coordinate Ca(2+).

It belongs to the peroxidase family. Classical plant (class III) peroxidase subfamily. Requires Ca(2+) as cofactor. Heme b is required as a cofactor.

It catalyses the reaction 2 a phenolic donor + H2O2 = 2 a phenolic radical donor + 2 H2O. Removal of H(2)O(2), oxidation of toxic reductants, biosynthesis and degradation of lignin, suberization, auxin catabolism, response to environmental stresses such as wounding, pathogen attack and oxidative stress. These functions might be dependent on each isozyme/isoform in each plant tissue. In Brassica rapa subsp. rapa (Turnip), this protein is Peroxidase P7.